The chain runs to 322 residues: MTSHLKKVELHCHLEGAASPALTEAQARKYGIDISGQLRDGVYIWHDFASFLECYDKVSEVYRTEEDYALLTETYLDELAGINTIYSELIVSPDHGKRIGLGADAYISGVCEGIRRAKAKSGIEARLIVTGERHFGPESVIGAAEYAAKAGNPLITGFNLAGEERMGRVADYIRAFDIARDAGLGLTIHAGEVCGAFSVADALDAVRPARIGHGVRAIEDLDLVKRLADLGTVLEVCPGSNIALRVYPDFASHPLRRLKEAGVRVTISSDDPPFFHTSLEREYALAAEAFGFGDAEIDAMTRVAIEAAFVDEETRKALLARL.

3 residues coordinate Zn(2+): histidine 11, histidine 13, and histidine 189. The active-site Proton donor is glutamate 192. Aspartate 270 is a Zn(2+) binding site. Substrate is bound at residue aspartate 271.

Belongs to the metallo-dependent hydrolases superfamily. Adenosine and AMP deaminases family. Adenine deaminase type 2 subfamily. Requires Zn(2+) as cofactor.

It catalyses the reaction adenine + H2O + H(+) = hypoxanthine + NH4(+). In terms of biological role, catalyzes the hydrolytic deamination of adenine to hypoxanthine. Plays an important role in the purine salvage pathway and in nitrogen catabolism. This Rhizobium etli (strain ATCC 51251 / DSM 11541 / JCM 21823 / NBRC 15573 / CFN 42) protein is Adenine deaminase.